Here is a 192-residue protein sequence, read N- to C-terminus: Small ribosomal subunit protein uS5 (192 aa).

The region spanning 20–83 is the S5 DRBM domain; it reads FVDKLVHINR…EAAKRGLIRV (64 aa). Residues 162-192 form a disordered region; the sequence is SVAARRGLKVSALQARRRDADPADTSEAAVA.

The protein belongs to the universal ribosomal protein uS5 family. As to quaternary structure, part of the 30S ribosomal subunit. Contacts proteins S4 and S8.

Its function is as follows. With S4 and S12 plays an important role in translational accuracy. Functionally, located at the back of the 30S subunit body where it stabilizes the conformation of the head with respect to the body. In Methylorubrum extorquens (strain CM4 / NCIMB 13688) (Methylobacterium extorquens), this protein is Small ribosomal subunit protein uS5.